We begin with the raw amino-acid sequence, 1422 residues long: Guanine nucleotide exchange factor subunit RIC1 (1422 aa).

WD repeat units lie at residues 64-103 (TQFGSYKQAEWRPDSTMIAVSTANGYILFFHITSSRGDKY) and 304-343 (NKTGAVKLIRWSPDNSAVIVTWEYGGLSLWSVFGAQLICT). 2 disordered regions span residues 442 to 462 (NPKYSSARAERMPRHEKSPFA) and 986 to 1005 (SGESETPPSTPTSQEPSSSG). Basic and acidic residues predominate over residues 449-460 (RAERMPRHEKSP). T991 and T995 each carry phosphothreonine. 5 positions are modified to phosphoserine: S1014, S1016, S1018, S1036, and S1171. The tract at residues 1021-1048 (AENVPPGKFGLQKTLSMPTGPSGKRWSK) is disordered. 2 disordered regions span residues 1179–1198 (THRDTDRASSPGPQMQDAFL) and 1355–1422 (DTFQ…CSVS). The span at 1378-1396 (GSCSHGSISQSEPGSNNVV) shows a compositional bias: polar residues. Over residues 1403–1412 (TTQADEEEPL) the composition is skewed to acidic residues.

This sequence belongs to the RIC1 family. As to quaternary structure, forms a complex with RGP1; the interaction enhances RAB6A GTPase activity. Interacts (via central domain) with RGP1. Interacts with RAB6A; the interaction is direct with a preference for RAB6A-GDP. Interacts (via C-terminus domain) with RAB33B; the interaction is direct with a preference for RAB33B-GTP. Interacts with GJA1. In terms of tissue distribution, expressed in the eye lens.

The protein resides in the cytoplasm. Its subcellular location is the cytosol. It is found in the membrane. In terms of biological role, the RIC1-RGP1 complex acts as a guanine nucleotide exchange factor (GEF), which activates RAB6A by exchanging bound GDP for free GTP, and may thereby be required for efficient fusion of endosome-derived vesicles with the Golgi compartment. The RIC1-RGP1 complex participates in the recycling of mannose-6-phosphate receptors. Required for phosphorylation and localization of GJA1. Is a regulator of procollagen transport and secretion, and is required for correct cartilage morphogenesis and development of the craniofacial skeleton. This Mus musculus (Mouse) protein is Guanine nucleotide exchange factor subunit RIC1.